The sequence spans 179 residues: Transcription factor NF-E4 (179 aa).

Lys43 bears the N6-acetyllysine mark. The segment at Ala100–Gly179 is disordered. 2 stretches are compositionally biased toward polar residues: residues Leu143–Ser153 and Ala163–Gly179.

Component of the SSP (stage selector protein) complex, which appears to be a heteromer of TFCP2 and 2 copies of NFE4. Interacts with HDAC1 and PCAF. Isoform 2 interacts with TFCP2. Post-translationally, acetylation at Lys-43 prolongs the protein half-life by preventing ubiquitin-mediated degradation and reduces the interaction between NF-E4 and HDAC1, potentially maximizing the activating ability of the factor at the gamma-promoter. In terms of processing, ubiquitinated; leading to its degradation by the proteasome. Acetylation at Lys-43 prevents ubiquitination. In terms of tissue distribution, specifically expressed in fetal liver, cord blood and bone marrow. Also expressed in the K562 and HEL cell lines, which constitutively express the fetal globin genes.

The protein resides in the nucleus. Functions as part of the SSP (stage selector protein) complex, a complex that contributes to the preferential expression of the gamma-gene in fetal erythroid cells by facilitating the interaction of the gamma-globin genes with enhancer elements contained in the locus control region (LCR). The complex binds to the stage selector element (SSE) in the proximal gamma-globin promoter. In contrast, isoform 2 acts as a repressor of gamma-globin gene expression by preventing NFE2 and RNA polymerase II recruitment to the promoter. This chain is Transcription factor NF-E4 (NFE4), found in Homo sapiens (Human).